Here is a 451-residue protein sequence, read N- to C-terminus: Alpha-galactosidase (451 aa).

5–71 contacts NAD(+); that stretch reads PKITFIGAGS…ASGRITCHTN (67 aa). Residue Asn151 participates in substrate binding. Residue Cys173 participates in Mn(2+) binding. Residue His174 is the Proton donor of the active site. His203 contributes to the Mn(2+) binding site. Arg287 contacts substrate.

Belongs to the glycosyl hydrolase 4 family. Homodimer. Requires Mn(2+) as cofactor. NAD(+) is required as a cofactor.

The catalysed reaction is Hydrolysis of terminal, non-reducing alpha-D-galactose residues in alpha-D-galactosides, including galactose oligosaccharides, galactomannans and galactolipids.. In Salmonella typhimurium (strain LT2 / SGSC1412 / ATCC 700720), this protein is Alpha-galactosidase (melA).